Reading from the N-terminus, the 338-residue chain is MKTTAWTIGDIHGIGPEIILKTFDESLRSTGQPEEKPIVIGSAEALLYYSKRLGLSIDIRTIDAPEKAAAYPQGVLPVISVGEPSSPLQPGTISAEAGRLSMLAIEKAANLCLEGRCAAMVTAPIHKEAVARAGYPHTGHTDFLADLCATDNPTMLFRDPVSGLMVALATIHVALHRVPELIRSMDMSAFFSNLNRSLQSDFRIEQPRIAVLGLNPHASDGGVMGREEKEIILPCIDALADRQNIEGPFAADGFFGSGKYRNYDVTVAMYHDQGLLPFKVLAFDTGINVTLGLPLVRTSPDHGTSFDIAGQGRASHRSFSEAAKLAWEIAFNRLMEHS.

Substrate-binding residues include His-140 and Thr-141. His-172, His-217, and His-271 together coordinate a divalent metal cation. Substrate-binding residues include Lys-279, Asn-288, and Arg-297.

The protein belongs to the PdxA family. Homodimer. A divalent metal cation serves as cofactor.

It localises to the cytoplasm. The catalysed reaction is 4-(phosphooxy)-L-threonine + NAD(+) = 3-amino-2-oxopropyl phosphate + CO2 + NADH. It functions in the pathway cofactor biosynthesis; pyridoxine 5'-phosphate biosynthesis; pyridoxine 5'-phosphate from D-erythrose 4-phosphate: step 4/5. Catalyzes the NAD(P)-dependent oxidation of 4-(phosphooxy)-L-threonine (HTP) into 2-amino-3-oxo-4-(phosphooxy)butyric acid which spontaneously decarboxylates to form 3-amino-2-oxopropyl phosphate (AHAP). This chain is 4-hydroxythreonine-4-phosphate dehydrogenase, found in Prosthecochloris aestuarii (strain DSM 271 / SK 413).